Reading from the N-terminus, the 588-residue chain is Dual specificity tyrosine-phosphorylation-regulated kinase 3 (588 aa).

The segment at 1–188 (MGGTARGPGR…HGVIGGPNNG (188 aa)) is disordered. Residues 97-134 (SNTIQSDGISDSEKCSPTVSQGKSSDCLNTVKSNSSSK) are compositionally biased toward polar residues. Positions 209–522 (YEVLKIIGKG…PAQALRHPWI (314 aa)) constitute a Protein kinase domain. Residues 215–223 (IGKGSFGQV), Lys238, and 288–291 (FELL) each bind ATP. Asp335 functions as the Proton acceptor in the catalytic mechanism. Residue Ser350 is modified to Phosphoserine. Residue Tyr369 is modified to Phosphotyrosine. The Nuclear localization signal motif lies at 468 to 481 (RSRRGKKRGPPGSK).

The protein belongs to the protein kinase superfamily. CMGC Ser/Thr protein kinase family. MNB/DYRK subfamily. Interacts with SIRT1. The cofactor is Mg(2+). Ubiquitinated at anaphase by the anaphase-promoting complex (APC/C), leading to its degradation by the proteasome. Post-translationally, protein kinase activity is activated following autophosphorylation at Tyr-369. Autophosphorylation at Ser-350 stabilizes the protein and enhances the protein kinase activity. Isoform 1: Highly expressed in testis and in hematopoietic tissue such as fetal liver, and bone marrow. Isoform 1: Predominant form in fetal liver and bone marrow. Isoform 1: Present at low levels in heart, pancreas, lymph node and thymus. Isoform 2: Highly expressed in testis and in hematopoietic tissue such as fetal liver, and bone marrow. Isoform 2: Predominant form in testis. Isoform 2: Present at low levels in heart, pancreas, lymph node and thymus.

Its subcellular location is the nucleus. It is found in the cytoplasm. The protein resides in the nucleus speckle. It localises to the cytoplasmic granule. The protein localises to the cytoskeleton. Its subcellular location is the microtubule organizing center. It is found in the centrosome. The catalysed reaction is L-seryl-[protein] + ATP = O-phospho-L-seryl-[protein] + ADP + H(+). It catalyses the reaction L-threonyl-[protein] + ATP = O-phospho-L-threonyl-[protein] + ADP + H(+). It carries out the reaction L-tyrosyl-[protein] + ATP = O-phospho-L-tyrosyl-[protein] + ADP + H(+). Its activity is regulated as follows. Protein kinase activity is activated following autophosphorylation at Tyr-369. Inhibited by harmine, an ATP competitive inhibitor. Inhibited by small-compound GSK-626616. Dual-specificity protein kinase that promotes disassembly of several types of membraneless organelles during mitosis, such as stress granules, nuclear speckles and pericentriolar material. Dual-specificity tyrosine-regulated kinases (DYRKs) autophosphorylate a critical tyrosine residue in their activation loop and phosphorylate their substrate on serine and threonine residues. Acts as a central dissolvase of membraneless organelles during the G2-to-M transition, after the nuclear-envelope breakdown: acts by mediating phosphorylation of multiple serine and threonine residues in unstructured domains of proteins, such as SRRM1 and PCM1. Does not mediate disassembly of all membraneless organelles: disassembly of P-body and nucleolus is not regulated by DYRK3. Dissolution of membraneless organelles at the onset of mitosis is also required to release mitotic regulators, such as ZNF207, from liquid-unmixed organelles where they are sequestered and keep them dissolved during mitosis. Regulates mTORC1 by mediating the dissolution of stress granules: during stressful conditions, DYRK3 partitions from the cytosol to the stress granule, together with mTORC1 components, which prevents mTORC1 signaling. When stress signals are gone, the kinase activity of DYRK3 is required for the dissolution of stress granule and mTORC1 relocation to the cytosol: acts by mediating the phosphorylation of the mTORC1 inhibitor AKT1S1, allowing full reactivation of mTORC1 signaling. Also acts as a negative regulator of EPO-dependent erythropoiesis: may place an upper limit on red cell production during stress erythropoiesis. Inhibits cell death due to cytokine withdrawal in hematopoietic progenitor cells. Promotes cell survival upon genotoxic stress through phosphorylation of SIRT1: this in turn inhibits p53/TP53 activity and apoptosis. The polypeptide is Dual specificity tyrosine-phosphorylation-regulated kinase 3 (Homo sapiens (Human)).